A 62-amino-acid polypeptide reads, in one-letter code: uncharacterized protein (62 aa).

This is an uncharacterized protein from Potato leafroll virus (strain Potato/Scotland/strain 1/1984) (PLrV).